Reading from the N-terminus, the 334-residue chain is Probable fructose-bisphosphate aldolase class 1 (334 aa).

The protein belongs to the class I fructose-bisphosphate aldolase family.

The catalysed reaction is beta-D-fructose 1,6-bisphosphate = D-glyceraldehyde 3-phosphate + dihydroxyacetone phosphate. Its pathway is carbohydrate degradation; glycolysis; D-glyceraldehyde 3-phosphate and glycerone phosphate from D-glucose: step 4/4. The polypeptide is Probable fructose-bisphosphate aldolase class 1 (Xanthomonas campestris pv. campestris (strain ATCC 33913 / DSM 3586 / NCPPB 528 / LMG 568 / P 25)).